The chain runs to 742 residues: Clamp-binding protein CrfC (742 aa).

The segment at 41–45 (QLALP) is clamp-binding consensus. Positions 66-402 (SRLEMVLAIV…LWEDSLFAQP (337 aa)) constitute a Dynamin-type G domain. The G1 motif stretch occupies residues 76–83 (GTMKAGKS). Positions 102–104 (MTA) are G2 motif. A G3 motif region spans residues 236 to 239 (DTPG). Residues 297 to 300 (NKFD) are G4 motif. Residues 331–334 (FPVS) are G5 motif. Residues 440–472 (RAHGLNVACEQLRQNIHQVEESLQLLQLNQAQV) adopt a coiled-coil conformation.

The protein belongs to the TRAFAC class dynamin-like GTPase superfamily. Dynamin/Fzo/YdjA family. Forms homooligomers. Binds to the beta sliding clamp processivity factor (DnaN) in the presence and absence of DNA, may bind to the clamp itself as homodimers or trimers. Homooligomers may be able to bind more than 1 clamp complex.

It is found in the cytoplasm. Important for the colocalization of sister nascent DNA strands after replication fork passage during DNA replication, and for positioning and subsequent partitioning of sister chromosomes. Does not have GTPase activity on its own. In Escherichia coli, this protein is Clamp-binding protein CrfC (crfC).